The sequence spans 144 residues: Ribosomal RNA large subunit methyltransferase H (144 aa).

S-adenosyl-L-methionine contacts are provided by residues L63, G92, and 111-116; that span reads LSPMTF.

Belongs to the RNA methyltransferase RlmH family. As to quaternary structure, homodimer.

The protein resides in the cytoplasm. The enzyme catalyses pseudouridine(1915) in 23S rRNA + S-adenosyl-L-methionine = N(3)-methylpseudouridine(1915) in 23S rRNA + S-adenosyl-L-homocysteine + H(+). In terms of biological role, specifically methylates the pseudouridine at position 1915 (m3Psi1915) in 23S rRNA. This chain is Ribosomal RNA large subunit methyltransferase H, found in Parasynechococcus marenigrum (strain WH8102).